Here is a 619-residue protein sequence, read N- to C-terminus: DBH-like monooxygenase protein 2 (619 aa).

Positions 1-21 are cleaved as a signal peptide; the sequence is MACVLLFRLFLLLVLAAFSQG. Residues 22–594 lie on the Extracellular side of the membrane; that stretch reads KRLGPTSPLR…LSGSNTATLR (573 aa). One can recognise a DOMON domain in the interval 40–156; sequence RAVFLRWDFD…DTMRVLAAYG (117 aa). Y209 is an active-site residue. Intrachain disulfides connect C211–C261 and C248–C271. Cu cation is bound by residues H241 and H242. N-linked (GlcNAc...) asparagine glycosylation occurs at N250. Cu cation-binding residues include H309, H390, and H392. Intrachain disulfides connect C366–C481 and C444–C466. H390 is an active-site residue. A glycan (N-linked (GlcNAc...) asparagine) is linked at N405. M465 serves as a coordination point for Cu cation. The N-linked (GlcNAc...) asparagine glycan is linked to N477. Residues 595–615 form a helical membrane-spanning segment; it reads PLPMIAVLFLQGSLSCLLAML. Over 616-619 the chain is Cytoplasmic; sequence QTGV.

Belongs to the copper type II ascorbate-dependent monooxygenase family. Cu(2+) serves as cofactor. As to expression, expressed at low levels in thymus and testis.

It is found in the membrane. In Mus musculus (Mouse), this protein is DBH-like monooxygenase protein 2 (Moxd2).